The chain runs to 458 residues: UDP-N-acetylmuramoylalanine--D-glutamate ligase (458 aa).

124 to 130 (GSDGKTT) is an ATP binding site.

This sequence belongs to the MurCDEF family.

Its subcellular location is the cytoplasm. It catalyses the reaction UDP-N-acetyl-alpha-D-muramoyl-L-alanine + D-glutamate + ATP = UDP-N-acetyl-alpha-D-muramoyl-L-alanyl-D-glutamate + ADP + phosphate + H(+). The protein operates within cell wall biogenesis; peptidoglycan biosynthesis. Functionally, cell wall formation. Catalyzes the addition of glutamate to the nucleotide precursor UDP-N-acetylmuramoyl-L-alanine (UMA). This chain is UDP-N-acetylmuramoylalanine--D-glutamate ligase, found in Clostridium tetani (strain Massachusetts / E88).